A 947-amino-acid chain; its full sequence is Protocadherin alpha-4 (947 aa).

Residues 1–29 form the signal peptide; that stretch reads MEFSWGSGQESQRLLLSFLFLAIWEPGNS. 6 consecutive Cadherin domains span residues 30–133, 134–242, 243–350, 351–455, 456–565, and 573–681; these read QLHY…PPTF, PTTQ…SPVF, DRSL…APEL, EFKS…APAF, AQPE…APTL, and SGGI…APSR. Over 30-697 the chain is Extracellular; that stretch reads QLHYSIPEEA…NAEASLVDVN (668 aa). A disulfide bridge connects residues C96 and C102. 2 N-linked (GlcNAc...) asparagine glycosylation sites follow: N257 and N265. N548 carries an N-linked (GlcNAc...) asparagine glycan. A helical membrane pass occupies residues 698–718; it reads VYLIIAICAVSSLLVLTLLLY. The Cytoplasmic portion of the chain corresponds to 719–947; that stretch reads SALRCSTVPS…GNSTTDNSDQ (229 aa). PXXP repeat units lie at residues 734–737, 774–777, 796–799, 829–832, 870–873, and 888–891; these read PPKP, PSLS, PRQP, PGGP, PGNP, and PGSP. Positions 734-891 are 6 X 4 AA repeats of P-X-X-P; it reads PPKPVMVCSS…PDKFIIPGSP (158 aa). The segment at 738–947 is required for interaction with FYN; it reads VMVCSSAVGS…GNSTTDNSDQ (210 aa). Disordered regions lie at residues 761-805 and 824-853; these read GEYP…DWRY and ILRA…EVSP. Residues 897–947 form a disordered region; that stretch reads RQESANNQIDKSDFITFGKKEETKKKKKKKKGNKTQEKKEKGNSTTDNSDQ. Residues 906 to 920 show a composition bias toward basic and acidic residues; the sequence is DKSDFITFGKKEETK.

Forms homodimers in trans (molecules expressed by two different cells). Forms promiscuous heterodimers in cis (at the plasma membrane of the same cell) with other protocadherins. Interacts with FYN. Detected in brain.

It is found in the cell membrane. Calcium-dependent cell-adhesion protein involved in cells self-recognition and non-self discrimination. Thereby, it is involved in the establishment and maintenance of specific neuronal connections in the brain. This chain is Protocadherin alpha-4, found in Rattus norvegicus (Rat).